We begin with the raw amino-acid sequence, 1050 residues long: Toluene efflux pump membrane transporter TtgB (1050 aa).

Transmembrane regions (helical) follow at residues 10–30 (IFAW…ILKL), 339–359 (GVIH…YLFL), 370–390 (MTVP…GFSI), 393–413 (LTMF…IVVV), 440–460 (GALV…AFFG), 472–492 (ITIV…TPAL), 539–559 (VPFL…FARI), 871–891 (MPAL…ALYE), 893–913 (WSIP…ALIA), 923–943 (VYFL…AILI), 972–992 (IIMT…ASGA), and 1004–1024 (VIGG…LFFV).

The protein belongs to the resistance-nodulation-cell division (RND) (TC 2.A.6) family.

Its subcellular location is the cell inner membrane. In terms of biological role, the inner membrane transporter component of a constitutive organic solvent efflux system. Involved in export of toluene, styrene, m-xylene, propylbenzene and ethylbenzene. Also exports AMP and the antibiotics carbenicillin, nalidixic acid, chloramphenicol and tetracycline. The chain is Toluene efflux pump membrane transporter TtgB (ttgB) from Pseudomonas putida (strain DOT-T1E).